A 378-amino-acid polypeptide reads, in one-letter code: L-asparaginase-like protein GF11609 (378 aa).

The N-terminal stretch at 1 to 21 is a signal peptide; it reads MCSPLPLLILRLLLLTHPSLG. Cystine bridges form between C71/C76, C170/C186, and C325/C352.

The protein belongs to the Ntn-hydrolase family.

This chain is L-asparaginase-like protein GF11609, found in Drosophila ananassae (Fruit fly).